We begin with the raw amino-acid sequence, 323 residues long: Ribonuclease Z (323 aa).

The Zn(2+) site is built by His62, His64, Asp66, His67, His144, Asp215, and His273. Asp66 serves as the catalytic Proton acceptor.

This sequence belongs to the RNase Z family. Homodimer. Zn(2+) is required as a cofactor.

The catalysed reaction is Endonucleolytic cleavage of RNA, removing extra 3' nucleotides from tRNA precursor, generating 3' termini of tRNAs. A 3'-hydroxy group is left at the tRNA terminus and a 5'-phosphoryl group is left at the trailer molecule.. Functionally, zinc phosphodiesterase, which displays some tRNA 3'-processing endonuclease activity. Probably involved in tRNA maturation, by removing a 3'-trailer from precursor tRNA. The chain is Ribonuclease Z from Synechococcus sp. (strain WH7803).